Reading from the N-terminus, the 264-residue chain is Heavy metal-associated isoprenylated plant protein 17 (264 aa).

2 consecutive HMA domains span residues 32–95 and 133–204; these read VTDA…KKIE and IMEV…KERQ. Positions 185–218 form a coiled coil; the sequence is SRKLNKKMHQKIKKAEKERQEWESEMMLREAEEE. Cysteine 261 bears the Cysteine methyl ester mark. Cysteine 261 is lipidated: S-farnesyl cysteine. The propeptide at 262–264 is removed in mature form; it reads SIS.

Belongs to the HIPP family.

Its function is as follows. Probable heavy-metal-binding protein. This chain is Heavy metal-associated isoprenylated plant protein 17, found in Arabidopsis thaliana (Mouse-ear cress).